A 155-amino-acid chain; its full sequence is Small ribosomal subunit protein uS7 (155 aa).

It belongs to the universal ribosomal protein uS7 family. As to quaternary structure, part of the 30S ribosomal subunit. Contacts proteins S9 and S11.

Functionally, one of the primary rRNA binding proteins, it binds directly to 16S rRNA where it nucleates assembly of the head domain of the 30S subunit. Is located at the subunit interface close to the decoding center, probably blocks exit of the E-site tRNA. This Desulforapulum autotrophicum (strain ATCC 43914 / DSM 3382 / VKM B-1955 / HRM2) (Desulfobacterium autotrophicum) protein is Small ribosomal subunit protein uS7.